The chain runs to 475 residues: UDP-N-acetylmuramate--L-alanine ligase (475 aa).

Gly118–Thr124 lines the ATP pocket.

It belongs to the MurCDEF family.

The protein resides in the cytoplasm. The catalysed reaction is UDP-N-acetyl-alpha-D-muramate + L-alanine + ATP = UDP-N-acetyl-alpha-D-muramoyl-L-alanine + ADP + phosphate + H(+). It functions in the pathway cell wall biogenesis; peptidoglycan biosynthesis. Functionally, cell wall formation. The protein is UDP-N-acetylmuramate--L-alanine ligase of Thermosynechococcus vestitus (strain NIES-2133 / IAM M-273 / BP-1).